The chain runs to 33 residues: uncharacterized protein (33 aa).

The protein resides in the cytoplasm. It is found in the nucleus. This is an uncharacterized protein from Schizosaccharomyces pombe (strain 972 / ATCC 24843) (Fission yeast).